The primary structure comprises 81 residues: Small serum protein 4 (81 aa).

The signal sequence occupies residues Met1–Gly19. 3 cysteine pairs are disulfide-bonded: Cys21–Cys74, Cys41–Cys66, and Cys64–Cys73.

It belongs to the beta-microseminoprotein family.

The protein localises to the secreted. In terms of biological role, shows an slight inhibitory effect toward the metalloproteinase brevilysin H6, but does not inhibit the metalloproteinases thermolysin, HR1A and HR1B. This chain is Small serum protein 4, found in Protobothrops flavoviridis (Habu).